A 203-amino-acid polypeptide reads, in one-letter code: LexA repressor (203 aa).

A DNA-binding region (H-T-H motif) is located at residues 30-50 (VREICQAVSLKSTSTVHGHLK). Active-site for autocatalytic cleavage activity residues include Ser-127 and Lys-164.

Belongs to the peptidase S24 family. In terms of assembly, homodimer.

The catalysed reaction is Hydrolysis of Ala-|-Gly bond in repressor LexA.. Its function is as follows. Represses a number of genes involved in the response to DNA damage (SOS response), including recA and lexA. In the presence of single-stranded DNA, RecA interacts with LexA causing an autocatalytic cleavage which disrupts the DNA-binding part of LexA, leading to derepression of the SOS regulon and eventually DNA repair. The protein is LexA repressor of Clostridium perfringens (strain SM101 / Type A).